Consider the following 424-residue polypeptide: Glutamyl-tRNA reductase (424 aa).

Substrate-binding positions include 49 to 52 (TCNR), serine 107, 112 to 114 (EPQ), and glutamine 118. The Nucleophile role is filled by cysteine 50. 187-192 (GAGETI) serves as a coordination point for NADP(+).

The protein belongs to the glutamyl-tRNA reductase family. Homodimer.

It catalyses the reaction (S)-4-amino-5-oxopentanoate + tRNA(Glu) + NADP(+) = L-glutamyl-tRNA(Glu) + NADPH + H(+). The protein operates within porphyrin-containing compound metabolism; protoporphyrin-IX biosynthesis; 5-aminolevulinate from L-glutamyl-tRNA(Glu): step 1/2. In terms of biological role, catalyzes the NADPH-dependent reduction of glutamyl-tRNA(Glu) to glutamate 1-semialdehyde (GSA). The sequence is that of Glutamyl-tRNA reductase from Pseudomonas fluorescens (strain ATCC BAA-477 / NRRL B-23932 / Pf-5).